Consider the following 415-residue polypeptide: Lipoyl synthase, mitochondrial (415 aa).

The transit peptide at 1 to 32 directs the protein to the mitochondrion; it reads MAASTNRLRFLYSSARTVPQTGSITPISRRTY. Over residues 22-32 the composition is skewed to polar residues; it reads GSITPISRRTY. Residues 22-53 form a disordered region; the sequence is GSITPISRRTYATTEPSPSATGAPATARKRTN. A compositionally biased stretch (low complexity) spans 33-47; it reads ATTEPSPSATGAPAT. 7 residues coordinate [4Fe-4S] cluster: C132, C137, C143, C163, C167, C170, and S378. The region spanning 146–367 is the Radical SAM core domain; the sequence is GSDKSAATAT…RQRALDMGFL (222 aa). Positions 395 to 415 are disordered; sequence AAGTAGESVTDSKAAVDEATR.

It belongs to the radical SAM superfamily. Lipoyl synthase family. [4Fe-4S] cluster serves as cofactor.

The protein resides in the mitochondrion. It carries out the reaction [[Fe-S] cluster scaffold protein carrying a second [4Fe-4S](2+) cluster] + N(6)-octanoyl-L-lysyl-[protein] + 2 oxidized [2Fe-2S]-[ferredoxin] + 2 S-adenosyl-L-methionine + 4 H(+) = [[Fe-S] cluster scaffold protein] + N(6)-[(R)-dihydrolipoyl]-L-lysyl-[protein] + 4 Fe(3+) + 2 hydrogen sulfide + 2 5'-deoxyadenosine + 2 L-methionine + 2 reduced [2Fe-2S]-[ferredoxin]. Its pathway is protein modification; protein lipoylation via endogenous pathway; protein N(6)-(lipoyl)lysine from octanoyl-[acyl-carrier-protein]: step 2/2. Catalyzes the radical-mediated insertion of two sulfur atoms into the C-6 and C-8 positions of the octanoyl moiety bound to the lipoyl domains of lipoate-dependent enzymes, thereby converting the octanoylated domains into lipoylated derivatives. In Aspergillus oryzae (strain ATCC 42149 / RIB 40) (Yellow koji mold), this protein is Lipoyl synthase, mitochondrial.